Reading from the N-terminus, the 89-residue chain is Small ribosomal subunit protein bS20 (89 aa).

2 disordered regions span residues 1-25 and 69-89; these read MANI…ASMK and KNAA…IQAS. Positions 7–20 are enriched in basic residues; sequence AIKRAKTSEKRRAH.

It belongs to the bacterial ribosomal protein bS20 family.

Functionally, binds directly to 16S ribosomal RNA. This Geobacillus kaustophilus (strain HTA426) protein is Small ribosomal subunit protein bS20.